Consider the following 69-residue polypeptide: DNA gyrase inhibitor YacG (69 aa).

Zn(2+)-binding residues include Cys-12, Cys-15, Cys-31, and Cys-35. Residues 49–69 are disordered; sequence RVPVEPKPDEGETPDQAERPQ.

The protein belongs to the DNA gyrase inhibitor YacG family. In terms of assembly, interacts with GyrB. Zn(2+) serves as cofactor.

In terms of biological role, inhibits all the catalytic activities of DNA gyrase by preventing its interaction with DNA. Acts by binding directly to the C-terminal domain of GyrB, which probably disrupts DNA binding by the gyrase. The protein is DNA gyrase inhibitor YacG of Thiobacillus denitrificans (strain ATCC 25259 / T1).